Reading from the N-terminus, the 429-residue chain is Histidine--tRNA ligase (429 aa).

Belongs to the class-II aminoacyl-tRNA synthetase family. In terms of assembly, homodimer.

The protein localises to the cytoplasm. The catalysed reaction is tRNA(His) + L-histidine + ATP = L-histidyl-tRNA(His) + AMP + diphosphate + H(+). In Dechloromonas aromatica (strain RCB), this protein is Histidine--tRNA ligase.